Here is a 91-residue protein sequence, read N- to C-terminus: Acylphosphatase (91 aa).

Residues 5-91 enclose the Acylphosphatase-like domain; that stretch reads RAHVFVSGRV…EGVDGFEVRW (87 aa). Catalysis depends on residues Arg-20 and Asn-38.

The protein belongs to the acylphosphatase family.

The catalysed reaction is an acyl phosphate + H2O = a carboxylate + phosphate + H(+). The chain is Acylphosphatase (acyP) from Haloarcula marismortui (strain ATCC 43049 / DSM 3752 / JCM 8966 / VKM B-1809) (Halobacterium marismortui).